A 122-amino-acid polypeptide reads, in one-letter code: Large ribosomal subunit protein uL14 (122 aa).

This sequence belongs to the universal ribosomal protein uL14 family. In terms of assembly, part of the 50S ribosomal subunit. Forms a cluster with proteins L3 and L19. In the 70S ribosome, L14 and L19 interact and together make contacts with the 16S rRNA in bridges B5 and B8.

Its function is as follows. Binds to 23S rRNA. Forms part of two intersubunit bridges in the 70S ribosome. This Pseudomonas fluorescens (strain ATCC BAA-477 / NRRL B-23932 / Pf-5) protein is Large ribosomal subunit protein uL14.